The sequence spans 85 residues: Small ribosomal subunit protein uS12m (85 aa).

It belongs to the universal ribosomal protein uS12 family.

It localises to the mitochondrion matrix. The protein resides in the kinetoplast. In terms of biological role, protein S12 is involved in the translation initiation step. This is Small ribosomal subunit protein uS12m (RPS12) from Leishmania tarentolae (Sauroleishmania tarentolae).